Here is a 457-residue protein sequence, read N- to C-terminus: UDP-glycosyltransferase 74C1 (457 aa).

UDP-alpha-D-glucose is bound by residues Thr281, Val336 to Gln338, His353 to Glu361, and Trp375 to Gln378.

Belongs to the UDP-glycosyltransferase family.

The polypeptide is UDP-glycosyltransferase 74C1 (UGT74C1) (Arabidopsis thaliana (Mouse-ear cress)).